Reading from the N-terminus, the 335-residue chain is Tryptophan--tRNA ligase (335 aa).

Residues 13-15 (QPS) and 21-22 (GN) contribute to the ATP site. The short motif at 14-22 (PSGNLTIGN) is the 'HIGH' region element. Position 136 (Asp136) interacts with L-tryptophan. ATP is bound by residues 148-150 (GQD), Ile187, and 196-200 (KMSKS). The short motif at 196–200 (KMSKS) is the 'KMSKS' region element.

This sequence belongs to the class-I aminoacyl-tRNA synthetase family. Homodimer.

Its subcellular location is the cytoplasm. It catalyses the reaction tRNA(Trp) + L-tryptophan + ATP = L-tryptophyl-tRNA(Trp) + AMP + diphosphate + H(+). In terms of biological role, catalyzes the attachment of tryptophan to tRNA(Trp). This Buchnera aphidicola subsp. Acyrthosiphon pisum (strain APS) (Acyrthosiphon pisum symbiotic bacterium) protein is Tryptophan--tRNA ligase.